The sequence spans 577 residues: Aspartate--tRNA(Asp/Asn) ligase (577 aa).

Glu171 contributes to the L-aspartate binding site. Residues 195–198 (QLFK) are aspartate. Arg217 contributes to the L-aspartate binding site. ATP is bound by residues 217 to 219 (RDE) and Gln226. An L-aspartate-binding site is contributed by His444. Glu474 contributes to the ATP binding site. Arg481 is a binding site for L-aspartate. ATP is bound at residue 526–529 (GFDR).

This sequence belongs to the class-II aminoacyl-tRNA synthetase family. Type 1 subfamily. Homodimer.

It localises to the cytoplasm. The enzyme catalyses tRNA(Asx) + L-aspartate + ATP = L-aspartyl-tRNA(Asx) + AMP + diphosphate. In terms of biological role, aspartyl-tRNA synthetase with relaxed tRNA specificity since it is able to aspartylate not only its cognate tRNA(Asp) but also tRNA(Asn). Reaction proceeds in two steps: L-aspartate is first activated by ATP to form Asp-AMP and then transferred to the acceptor end of tRNA(Asp/Asn). This chain is Aspartate--tRNA(Asp/Asn) ligase, found in Helicobacter pylori (strain Shi470).